A 300-amino-acid chain; its full sequence is Acetaldehyde dehydrogenase 1 (300 aa).

11 to 14 contributes to the NAD(+) binding site; the sequence is SGNI. Residue C126 is the Acyl-thioester intermediate of the active site. NAD(+)-binding positions include 157 to 165 and N276; that span reads SAGPGTRAN.

The protein belongs to the acetaldehyde dehydrogenase family.

The catalysed reaction is acetaldehyde + NAD(+) + CoA = acetyl-CoA + NADH + H(+). The protein is Acetaldehyde dehydrogenase 1 of Rhodococcus erythropolis (strain PR4 / NBRC 100887).